We begin with the raw amino-acid sequence, 393 residues long: Chorismate synthase (393 aa).

Residues arginine 40 and arginine 46 each coordinate NADP(+). Residues 129 to 131 (RSS), 249 to 250 (QA), glycine 301, 316 to 320 (KPIPT), and arginine 342 contribute to the FMN site.

Belongs to the chorismate synthase family. As to quaternary structure, homotetramer. FMNH2 serves as cofactor.

The catalysed reaction is 5-O-(1-carboxyvinyl)-3-phosphoshikimate = chorismate + phosphate. The protein operates within metabolic intermediate biosynthesis; chorismate biosynthesis; chorismate from D-erythrose 4-phosphate and phosphoenolpyruvate: step 7/7. Catalyzes the anti-1,4-elimination of the C-3 phosphate and the C-6 proR hydrogen from 5-enolpyruvylshikimate-3-phosphate (EPSP) to yield chorismate, which is the branch point compound that serves as the starting substrate for the three terminal pathways of aromatic amino acid biosynthesis. This reaction introduces a second double bond into the aromatic ring system. The polypeptide is Chorismate synthase (Geobacter sulfurreducens (strain ATCC 51573 / DSM 12127 / PCA)).